The primary structure comprises 519 residues: Membrane-bound glycerophospholipid O-acyltransferase 2 (519 aa).

The next 6 membrane-spanning stretches (helical) occupy residues 22-42 (PIDQVNFVVCQLFALLAAVWF), 61-81 (TLLGLYLAFFCFGWYALHFLV), 88-108 (CIMIIAGVESMQQCCFVFALG), 184-204 (FMGILAGPLCSYKDYIAFIEG), 236-256 (LLVCGLSLLFHLTISNMLPVE), and 263-283 (FQATASWPTKATYLYVSLLAA). Residues Asn341 and His372 contribute to the active site. Transmembrane regions (helical) follow at residues 365–385 (FFLSAIWHGVYPGYYLTFLTG), 415–435 (LITWVATQITISYTVVPFVLL), and 443–463 (FYSSWYYCLHVCSILVLLLLP). The tract at residues 497–519 (FSTMNNVCNQNRDTGSRHSSLTQ) is disordered.

This sequence belongs to the membrane-bound acyltransferase family. As to expression, highly expressed in epididymis, brain, testis, and ovary.

It localises to the endoplasmic reticulum membrane. The catalysed reaction is a 1-acyl-sn-glycero-3-phosphocholine + an acyl-CoA = a 1,2-diacyl-sn-glycero-3-phosphocholine + CoA. It catalyses the reaction a 1-acyl-sn-glycero-3-phosphoethanolamine + an acyl-CoA = a 1,2-diacyl-sn-glycero-3-phosphoethanolamine + CoA. The enzyme catalyses a 1-O-(1Z-alkenyl)-sn-glycero-3-phosphocholine + (9Z)-octadecenoyl-CoA = 1-O-(1Z)-alkenyl-2-(9Z)-octadecenoyl-sn-glycero-3-phosphocholine + CoA. It carries out the reaction a 1-O-(1Z-alkenyl)-sn-glycero-3-phosphoethanolamine + (9Z)-octadecenoyl-CoA = 1-O-(1Z)-alkenyl-2-(9Z)-octadecenoyl-sn-glycero-3-phosphoethanolamine + CoA. The catalysed reaction is 1-octadecanoyl-sn-glycero-3-phosphoethanolamine + (9Z)-octadecenoyl-CoA = 1-octadecanoyl-2-(9Z-octadecenoyl)-sn-glycero-3-phosphoethanolamine + CoA. It catalyses the reaction 1-octadecanoyl-sn-glycero-3-phosphocholine + (9Z)-octadecenoyl-CoA = 1-octadecanoyl-2-(9Z-octadecenoyl)-sn-glycero-3-phosphocholine + CoA. The enzyme catalyses 1-(9Z-octadecenoyl)-sn-glycero-3-phosphoethanolamine + (9Z)-octadecenoyl-CoA = 1,2-di-(9Z-octadecenoyl)-sn-glycero-3-phosphoethanolamine + CoA. It carries out the reaction 1-hexadecanoyl-sn-glycero-3-phosphoethanolamine + (9Z)-octadecenoyl-CoA = 1-hexadecanoyl-2-(9Z-octadecenoyl)-sn-glycero-3-phosphoethanolamine + CoA. The catalysed reaction is 1-hexadecanoyl-sn-glycero-3-phosphocholine + (9Z)-octadecenoyl-CoA = 1-hexadecanoyl-2-(9Z-octadecenoyl)-sn-glycero-3-phosphocholine + CoA. It catalyses the reaction (9Z)-hexadecenoyl-CoA + 1-hexadecanoyl-sn-glycero-3-phosphocholine = 1-hexadecanoyl-2-(9Z-hexadecenoyl)-sn-glycero-3-phosphocholine + CoA. The enzyme catalyses 1-hexadecanoyl-sn-glycero-3-phosphoethanolamine + (9Z)-hexadecenoyl-CoA = 1-hexadecanoyl-2-(9Z)-hexadecenoyl-sn-glycero-3-phosphoethanolamine + CoA. It carries out the reaction (9Z,12Z)-octadecadienoyl-CoA + 1-hexadecanoyl-sn-glycero-3-phosphocholine = 1-hexadecanoyl-2-(9Z,12Z-octadecadienoyl)-sn-glycero-3-phosphocholine + CoA. Its pathway is lipid metabolism; phospholipid metabolism. With respect to regulation, partially inhibited by thimerosal. Acyltransferase which catalyzes the transfer of an acyl group from an acyl-CoA to a lysophospholipid leading to the production of a phospholipid and participates in the reacylation step of the phospholipid remodeling pathway also known as the Lands cycle. Catalyzes the acylation of lysophosphatidylcholine (1-acyl-sn-glycero-3-phosphocholine or LPC) and to a lesser extend lysophosphatidylethanolamine (1-acyl-sn-glycero-3-phosphoethanolamine or LPE). Does not acylates lysophosphatidic acid (LPA) and lysophosphatidylserine. Prefers oleoyl-CoA as the acyl donor. May be involved in chondrocyte differentiation. The protein is Membrane-bound glycerophospholipid O-acyltransferase 2 of Mus musculus (Mouse).